A 675-amino-acid chain; its full sequence is Rho GTPase-activating protein 40 (675 aa).

Disordered regions lie at residues 95-118 and 187-218; these read RDELREEDSGGNEGQLPEEGEAES and KMSSENGDSGMKGAQLSSGASKFPPAAEPGGL. Acidic residues predominate over residues 103–116; sequence SGGNEGQLPEEGEA. One can recognise a Rho-GAP domain in the interval 323–522; that stretch reads VPLDSLLEAD…IMVHYQDLLW (200 aa).

In terms of biological role, GTPase activator for the Rho-type GTPases by converting them to an inactive GDP-bound state. This chain is Rho GTPase-activating protein 40, found in Homo sapiens (Human).